The following is a 648-amino-acid chain: Sodium/nucleoside cotransporter 1 (648 aa).

At 1-83 the chain is on the cytoplasmic side; the sequence is MADDTPRQRE…LCREHWQLFE (83 aa). The chain crosses the membrane as a helical span at residues 84-104; sequence WISKGLLSTAYIGFLIVACLL. Topologically, residues 105 to 108 are extracellular; that stretch reads DFPR. A helical membrane pass occupies residues 109–129; sequence ALALFVITCVVLVFLAYNLLK. Topologically, residues 130 to 147 are cytoplasmic; that stretch reads RLLGSKLKKCVKFQGHSC. The helical transmembrane segment at 148–168 threads the bilayer; that stretch reads LSLWLKRGLALAAGLGVILWL. The Extracellular segment spans residues 169-175; it reads SLDTAQR. The chain crosses the membrane as a helical span at residues 176–196; sequence PEQLVSFAGICVFLVLLFAGS. Residues 197 to 201 lie on the Cytoplasmic side of the membrane; the sequence is KHHRA. Residues 202 to 222 form a helical membrane-spanning segment; sequence VSWRAVSWGLGLQFVLGLFVI. At 223–265 the chain is on the extracellular side; it reads RTEPGFVAFQWLGDQIRVFLSYTEAGSSFVFGEALVKDVFAFQ. A helical transmembrane segment spans residues 266–286; that stretch reads VLPIIVFFSCVMSVLYYLGLM. Residues 287 to 294 lie on the Cytoplasmic side of the membrane; the sequence is QWVILKIA. Residues 295–318 form a helical membrane-spanning segment; the sequence is WLMQVTMGTSATETLSVAGNIFVS. The Extracellular portion of the chain corresponds to 319–339; it reads QTEAPLLIRPYLADMTLSEVH. A helical membrane pass occupies residues 340 to 360; sequence VVMTGGYATIAGSLLGAYISF. A topological domain (cytoplasmic) is located at residue Gly-361. Residues 362–380 form a helical membrane-spanning segment; sequence IDASSLIAASVMAAPCALA. Residues 381–427 are Extracellular-facing; it reads LSKLVYPEVEESKFRSEEGVKLTYGDAQNLVEAASAGAAISVKVVAN. The helical transmembrane segment at 428 to 448 threads the bilayer; the sequence is IAANLIAFLAVLAFINAALSW. At 449–470 the chain is on the cytoplasmic side; sequence LGDMVDIQGLSFQLICSYVLRP. The helical transmembrane segment at 471–491 threads the bilayer; sequence VAFLMGVAWEDCPVVAELLGI. At 492-531 the chain is on the extracellular side; it reads KLFLNEFVAYQELSQYKQRRLAGAEEWLGDKKQWISVRAE. The helical transmembrane segment at 532-552 threads the bilayer; it reads ILTTYALCGFANFSSIGIMLG. Residues 553–571 lie on the Cytoplasmic side of the membrane; sequence GLTSMVPQRRSDFSQIVLR. The chain crosses the membrane as a helical span at residues 572 to 592; sequence ALITGAFVSLVNACVAGILYV. At 593–648 the chain is on the extracellular side; it reads PRGVEVDCMSLLNQTVSSSSFEVYLCCRQVFQNTSLEFGQEALHNCCRFYNHTVCT. Asn-605, Asn-625, and Asn-643 each carry an N-linked (GlcNAc...) asparagine glycan.

Belongs to the concentrative nucleoside transporter (CNT) (TC 2.A.41) family. In terms of processing, N-glycosylated. N-glycosylation is required for localization to the plasma membrane and the transporter activity.

It localises to the cell membrane. It is found in the apical cell membrane. The enzyme catalyses uridine(out) + Na(+)(out) = uridine(in) + Na(+)(in). It carries out the reaction thymidine(out) + Na(+)(out) = thymidine(in) + Na(+)(in). It catalyses the reaction cytidine(out) + Na(+)(out) = cytidine(in) + Na(+)(in). The catalysed reaction is adenosine(out) + Na(+)(out) = adenosine(in) + Na(+)(in). Its activity is regulated as follows. Due to its high apparent affinity but slow transport, adenosine could act as a negative regulator of pyrimidine transport under some conditions. Its function is as follows. Sodium and pyrimidine nucleoside symporter of the plasma membrane that imports uridine, thymidine and cytidine into cells by coupling their transport to the transmembrane sodium electrochemical gradient. Also transports adenosine, an atypical substrate transported with high apparent affinity, but low maximum velocity. Therefore, exhibits the transport characteristics of the nucleoside transport system cit or N2 subtype (N2/cit). Involved in renal nucleoside (re)absorption. In Mus musculus (Mouse), this protein is Sodium/nucleoside cotransporter 1.